A 263-amino-acid polypeptide reads, in one-letter code: Hydroxyethylthiazole kinase (263 aa).

M39 contacts substrate. 2 residues coordinate ATP: K115 and T160. Residue G187 participates in substrate binding.

This sequence belongs to the Thz kinase family. Mg(2+) serves as cofactor.

It catalyses the reaction 5-(2-hydroxyethyl)-4-methylthiazole + ATP = 4-methyl-5-(2-phosphooxyethyl)-thiazole + ADP + H(+). It functions in the pathway cofactor biosynthesis; thiamine diphosphate biosynthesis; 4-methyl-5-(2-phosphoethyl)-thiazole from 5-(2-hydroxyethyl)-4-methylthiazole: step 1/1. In terms of biological role, catalyzes the phosphorylation of the hydroxyl group of 4-methyl-5-beta-hydroxyethylthiazole (THZ). In Staphylococcus aureus (strain JH9), this protein is Hydroxyethylthiazole kinase.